The chain runs to 483 residues: Protein PLASTID TRANSCRIPTIONALLY ACTIVE 14 (483 aa).

A chloroplast-targeting transit peptide spans 1–62; sequence MASSVSLQFL…TQPFPLFQSP (62 aa). Positions 80 to 325 constitute an SET domain; sequence YKIGYVRSVR…KGEEMTINYM (246 aa). Position 324 (tyrosine 324) interacts with S-adenosyl-L-methionine.

Belongs to the class V-like SAM-binding methyltransferase superfamily. As to quaternary structure, component of the transcriptionally active chromosome (TAC) complexes. Interacts with PTAC12/HMR/PAP5 and PTAC7. Binds to SL1/MTERF3. As to expression, mostly expressed in leaves, flowers and seedlings, and, to a lower extent, in stems and roots.

Its subcellular location is the plastid. It localises to the chloroplast thylakoid. In terms of biological role, essential for chloroplast development, especially for thylakoid formation. Involved in plastid gene expression, probably by maintaining plastid-encoded RNA polymerase (PEP) activity. This Arabidopsis thaliana (Mouse-ear cress) protein is Protein PLASTID TRANSCRIPTIONALLY ACTIVE 14.